Here is a 231-residue protein sequence, read N- to C-terminus: Large ribosomal subunit protein uL1 (231 aa).

This sequence belongs to the universal ribosomal protein uL1 family. As to quaternary structure, part of the 50S ribosomal subunit.

Functionally, binds directly to 23S rRNA. The L1 stalk is quite mobile in the ribosome, and is involved in E site tRNA release. In terms of biological role, protein L1 is also a translational repressor protein, it controls the translation of the L11 operon by binding to its mRNA. In Macrococcus caseolyticus (strain JCSC5402) (Macrococcoides caseolyticum), this protein is Large ribosomal subunit protein uL1.